A 512-amino-acid polypeptide reads, in one-letter code: MQPDLTPNPAPPLIALTGIGKRFPGVQALDDCHFDLRAGEVHALMGENGAGKSTLMKILAGVYQRDDGEIRMDGRAVEIADPRAAQALGIGIIHQELNLMNHLSVAQNIFIGREPRGRFGVFVDEAALNRDAAAIFARMRLDLDPRTPVGQLTVAKQQMVEIAKALSFDSRVLIMDEPTAALNNAEIAELFRIIGDLRAHGVGIVYISHKMDELRQIADRVTVMRDGKYVATVPMADTSMDAIIAMMVGRQLATEFRTPPDTSANDVALEVRGLSRGRAIRDVGFTLRRGEILGFAGLMGAGRTEVARAVFGADPVDAGEIRVHGKTVSIRSPADAVRHGIGYLSEDRKHFGLAVGMDVQNNIALSSMRRFVRRGLFLDARALRDTAQSYVRQLAIRTPSVTQPARLLSGGNQQKIVIAKWLLRDCDILFFDEPTRGIDVGAKSEIYKLLDALAADGKAIVMISSELPEVLRMSHRILVMCEGRVTGELRAADATQEKIMQLATQRESTVLS.

ABC transporter domains are found at residues 14-251 (IALT…VGRQ) and 262-507 (TSAN…TQRE). 46-53 (GENGAGKS) contributes to the ATP binding site.

It belongs to the ABC transporter superfamily. Carbohydrate importer 2 (CUT2) (TC 3.A.1.2) family.

Its subcellular location is the cell inner membrane. It carries out the reaction D-ribose(out) + ATP + H2O = D-ribose(in) + ADP + phosphate + H(+). It catalyses the reaction D-galactose(out) + ATP + H2O = D-galactose(in) + ADP + phosphate + H(+). Part of an ABC transporter complex involved in carbohydrate import. Could be involved in ribose, galactose and/or methyl galactoside import. Responsible for energy coupling to the transport system. The protein is Putative ribose/galactose/methyl galactoside import ATP-binding protein 1 of Burkholderia lata (strain ATCC 17760 / DSM 23089 / LMG 22485 / NCIMB 9086 / R18194 / 383).